We begin with the raw amino-acid sequence, 366 residues long: Carbamoyl phosphate synthase small chain (366 aa).

Residues 1 to 170 (MLKKRYLVLE…TKSPYVSTGY (170 aa)) form a CPSase region. L-glutamine contacts are provided by Ser47, Gly221, and Gly223. Positions 173–360 (SVVLVDFGKK…IDMINEYKTK (188 aa)) constitute a Glutamine amidotransferase type-1 domain. Cys248 (nucleophile) is an active-site residue. Leu249, Gln252, Asn290, Gly292, and Tyr293 together coordinate L-glutamine. Residues His333 and Glu335 contribute to the active site.

Belongs to the CarA family. In terms of assembly, composed of two chains; the small (or glutamine) chain promotes the hydrolysis of glutamine to ammonia, which is used by the large (or ammonia) chain to synthesize carbamoyl phosphate. Tetramer of heterodimers (alpha,beta)4.

It carries out the reaction hydrogencarbonate + L-glutamine + 2 ATP + H2O = carbamoyl phosphate + L-glutamate + 2 ADP + phosphate + 2 H(+). It catalyses the reaction L-glutamine + H2O = L-glutamate + NH4(+). It functions in the pathway amino-acid biosynthesis; L-arginine biosynthesis; carbamoyl phosphate from bicarbonate: step 1/1. Its pathway is pyrimidine metabolism; UMP biosynthesis via de novo pathway; (S)-dihydroorotate from bicarbonate: step 1/3. Functionally, small subunit of the glutamine-dependent carbamoyl phosphate synthetase (CPSase). CPSase catalyzes the formation of carbamoyl phosphate from the ammonia moiety of glutamine, carbonate, and phosphate donated by ATP, constituting the first step of 2 biosynthetic pathways, one leading to arginine and/or urea and the other to pyrimidine nucleotides. The small subunit (glutamine amidotransferase) binds and cleaves glutamine to supply the large subunit with the substrate ammonia. The chain is Carbamoyl phosphate synthase small chain from Staphylococcus saprophyticus subsp. saprophyticus (strain ATCC 15305 / DSM 20229 / NCIMB 8711 / NCTC 7292 / S-41).